The following is an 81-amino-acid chain: MTNNIRLLFGQKVRQIRLSKSNMSQEKLAFECDLHRTYISDIERGTRNVSLDNIEKISKALGVQPKDLLDFTTIGNCEQKK.

The 56-residue stretch at 13–68 folds into the HTH cro/C1-type domain; that stretch reads VRQIRLSKSNMSQEKLAFECDLHRTYISDIERGTRNVSLDNIEKISKALGVQPKDL. Residues 25–44 constitute a DNA-binding region (H-T-H motif); it reads QEKLAFECDLHRTYISDIER.

Its function is as follows. May help modulate methylase (M) and restriction enzyme (R) expression as cells undergo physiological changes such as sporulation or transformation. The sequence is that of Control protein C.BamHI from Bacillus amyloliquefaciens (Bacillus velezensis).